A 317-amino-acid chain; its full sequence is ADIPOR-like receptor IZH2 (317 aa).

Over 1–78 the chain is Cytoplasmic; the sequence is MSTLLERTKS…TFKSLFYLHN (78 aa). A helical transmembrane segment spans residues 79–99; sequence ESVNIYSHLIPALGFFTVLLL. Over 100 to 110 the chain is Extracellular; sequence DKSTIKVFATT. Residues 111–131 traverse the membrane as a helical segment; that stretch reads TWLDHMVIDLFYSGAFACLIL. At 132-153 the chain is on the cytoplasmic side; sequence SSSFHCLKSHSLRIATLGNKLD. The helical transmembrane segment at 154 to 174 threads the bilayer; it reads YLGICILIVTSMVSILYYGYF. Residues 175–176 are Extracellular-facing; sequence EK. A helical transmembrane segment spans residues 177-197; it reads FSLFCLFALITVSFGIACSIV. The Cytoplasmic segment spans residues 198–212; the sequence is SLKDKFRKREWRPYR. Residues 213–233 traverse the membrane as a helical segment; it reads AGLFVCFGLSSIIPIFSGLYC. Topologically, residues 234 to 242 are extracellular; that stretch reads YSFSEIWTQ. A helical membrane pass occupies residues 243-263; sequence IQLFWVLLGGVLYIIGAVLYG. Residues 264-276 are Cytoplasmic-facing; sequence MRFPEKICPGKFD. Residues 277-297 traverse the membrane as a helical segment; it reads IWGHSHQLFHFLVVIAALCHL. The Extracellular portion of the chain corresponds to 298–317; the sequence is RGLLNSYELVHIKMENGIVS.

The protein belongs to the ADIPOR family.

It is found in the membrane. Its function is as follows. Probable receptor, which is involved in metabolic pathways that regulate lipid metabolism such as fatty acid oxidation. This Saccharomyces cerevisiae (strain ATCC 204508 / S288c) (Baker's yeast) protein is ADIPOR-like receptor IZH2 (IZH2).